A 267-amino-acid chain; its full sequence is Phosphatidylglycerol--prolipoprotein diacylglyceryl transferase (267 aa).

4 consecutive transmembrane segments (helical) span residues Leu20 to Ala40, Phe57 to Ser77, Ile88 to Val108, and Phe117 to Ile137. Arg139 contacts a 1,2-diacyl-sn-glycero-3-phospho-(1'-sn-glycerol). A run of 3 helical transmembrane segments spans residues Gln175–Leu195, Gly205–Leu225, and Ile235–Leu255.

The protein belongs to the Lgt family.

It localises to the cell membrane. It catalyses the reaction L-cysteinyl-[prolipoprotein] + a 1,2-diacyl-sn-glycero-3-phospho-(1'-sn-glycerol) = an S-1,2-diacyl-sn-glyceryl-L-cysteinyl-[prolipoprotein] + sn-glycerol 1-phosphate + H(+). Its pathway is protein modification; lipoprotein biosynthesis (diacylglyceryl transfer). Catalyzes the transfer of the diacylglyceryl group from phosphatidylglycerol to the sulfhydryl group of the N-terminal cysteine of a prolipoprotein, the first step in the formation of mature lipoproteins. This is Phosphatidylglycerol--prolipoprotein diacylglyceryl transferase from Streptococcus suis (strain 98HAH33).